The following is a 296-amino-acid chain: MKTFLILALLAIVATTATTAVRVPVPQPQPQNPSQPQPQGQVPLVQQQQFPGQQQQFPPQQPYPQPQPFPSQQPYLQLQPFPQPQPFPPQLPYPQPPPFSPQQPYPQPQPQYPQPQQPISQQQAQQQQQQQQQQQQQQQQQQILQQILQQQLIPCRDVVLQQHNIAHARSQVLQQSTYQPLQQLCCQQLWQIPEQSRCQAIHNVVHAIILHQQQRQQQPSSQVSLQQPQQQYPSGQGFFQPSQQNPQAQGSVQPQQLPQFEEIRNLALQTLPRMCNVYIPPYCSTTIAPFGIFGTN.

Positions 1–20 are cleaved as a signal peptide; the sequence is MKTFLILALLAIVATTATTA. Disordered regions lie at residues 24 to 126 and 220 to 255; these read PVPQ…QAQQ and SSQVSLQQPQQQYPSGQGFFQPSQQNPQAQGSVQPQ. Positions 25-36 are enriched in pro residues; it reads VPQPQPQNPSQP. The span at 37–58 shows a compositional bias: low complexity; it reads QPQGQVPLVQQQQFPGQQQQFP. 2 stretches are compositionally biased toward pro residues: residues 59 to 71 and 81 to 116; these read PQQPYPQPQPFPS and FPQPQPFPPQLPYPQPPPFSPQQPYPQPQPQYPQPQ. 2 stretches are compositionally biased toward low complexity: residues 117–126 and 220–241; these read QPISQQQAQQ and SSQVSLQQPQQQYPSGQGFFQP. Residues 242–255 show a composition bias toward polar residues; that stretch reads SQQNPQAQGSVQPQ.

This sequence belongs to the gliadin/glutenin family. Post-translationally, substrate of transglutaminase.

Its function is as follows. Gliadin is the major seed storage protein in wheat. The chain is Alpha/beta-gliadin clone PW1215 from Triticum aestivum (Wheat).